Consider the following 1873-residue polypeptide: Voltage-dependent L-type calcium channel subunit alpha-1S (1873 aa).

The tract at residues 1–23 (MEPSSPQDEGLRKKQPKKPVPEI) is disordered. The Cytoplasmic segment spans residues 1 to 51 (MEPSSPQDEGLRKKQPKKPVPEILPRPPRALFCLTLENPLRKACISIVEWK). The stretch at 38–337 (NPLRKACISI…LVLGVLSGEF (300 aa)) is one I repeat. Residues 52–70 (PFETIILLTIFANCVALAV) traverse the membrane as a helical segment. Topologically, residues 71–85 (YLPMPEDDNNSLNLG) are extracellular. Asparagine 79 is a glycosylation site (N-linked (GlcNAc...) asparagine). Residues 86 to 106 (LEKLEYFFLIVFSIEAAMKII) form a helical membrane-spanning segment. At 107–115 (AYGFLFHQD) the chain is on the cytoplasmic side. Residues 116 to 136 (AYLRSGWNVLDFTIVFLGVFT) form a helical membrane-spanning segment. Topologically, residues 137 to 160 (VILEQVNVIQSHTAPMSSKGAGLD) are extracellular. A helical transmembrane segment spans residues 161–179 (VKALRAFRVLRPLRLVSGV). The Cytoplasmic segment spans residues 180–196 (PSLQVVLNSIFKAMLPL). Residues 197 to 218 (FHIALLVLFMVIIYAIIGLELF) form a helical membrane-spanning segment. The Extracellular portion of the chain corresponds to 219–279 (KGKMHKTCYF…HGITHFDNFG (61 aa)). Cystine bridges form between cysteine 226/cysteine 254 and cysteine 245/cysteine 261. An N-linked (GlcNAc...) asparagine glycan is attached at asparagine 257. The segment at residues 280–301 (FSMLTVYQCITMEGWTDVLYWV) is an intramembrane region (pore-forming). The short motif at 290 to 293 (TMEG) is the Selectivity filter of repeat I element. Glutamate 292 lines the Ca(2+) pocket. Residues 302–309 (NDAIGNEW) are Extracellular-facing. Residues 310–330 (PWIYFVTLILLGSFFILNLVL) form a helical membrane-spanning segment. At 331-432 (GVLSGEFTKE…WKCHDIVKSK (102 aa)) the chain is on the cytoplasmic side. The binding to the beta subunit stretch occupies residues 357–374 (QQLDEDLRGYMSWITQGE). 2 positions are modified to phosphoserine: serine 393 and serine 397. Residues 418–664 (NRIFRWKCHD…VFLAIAVDNL (247 aa)) form an II repeat. Residues 433-451 (VFYWLVILIVALNTLSIAS) traverse the membrane as a helical segment. The Extracellular portion of the chain corresponds to 452-462 (EHHNQPLWLTR). Residues 463–483 (LQDIANRVLLSLFTTEMLMKM) traverse the membrane as a helical segment. Residues 484-494 (YGLGLRQYFMS) are Cytoplasmic-facing. The helical transmembrane segment at 495-514 (IFNRFDCFVVCSGILEILLV) threads the bilayer. Residues 515–523 (ESGAMTPLG) are Extracellular-facing. The helical transmembrane segment at 524 to 542 (ISVLRCIRLLRIFKITKYW) threads the bilayer. Topologically, residues 543 to 561 (TSLSNLVASLLNSIRSIAS) are cytoplasmic. Residues 562–581 (LLLLLFLFIVIFALLGMQLF) form a helical membrane-spanning segment. Residues 582 to 601 (GGRYDFEDTEVRRSNFDNFP) are Extracellular-facing. The pore-forming intramembrane region spans 602-623 (QALISVFQVLTGEDWTSMMYNG). Residues 612 to 615 (TGED) carry the Selectivity filter of repeat II motif. Residue glutamate 614 participates in Ca(2+) binding. The Extracellular segment spans residues 624 to 633 (IMAYGGPSYP). A helical transmembrane segment spans residues 634 to 653 (GMLVCIYFIILFVCGNYILL). Residues 654-799 (NVFLAIAVDN…VLCHRIVNAT (146 aa)) lie on the Cytoplasmic side of the membrane. Disordered stretches follow at residues 675 to 717 (KAKA…IPTT) and 731 to 757 (EVKDPYPSADFPGDDEEDEPEIPLSPR). At serine 687 the chain carries Phosphoserine; by PKA. Residues 690 to 711 (LPDKSEEEKSTMAKKLEQKPKG) are compositionally biased toward basic and acidic residues. Acidic residues predominate over residues 742–751 (PGDDEEDEPE). Positions 747–760 (EDEPEIPLSPRPRP) are interaction with STAC, STAC2 and STAC3 (via SH3 domains). The stretch at 786-1068 (NKIRVLCHRI…IFVGFVIVTF (283 aa)) is one III repeat. A helical transmembrane segment spans residues 800–818 (WFTNFILLFILLSSAALAA). The Extracellular segment spans residues 819–830 (EDPIRADSMRNQ). The helical transmembrane segment at 831 to 850 (ILKHFDIGFTSVFTVEIVLK) threads the bilayer. The Cytoplasmic portion of the chain corresponds to 851-866 (MTTYGAFLHKGSFCRN). A helical transmembrane segment spans residues 867 to 885 (YFNMLDLLVVAVSLISMGL). Topologically, residues 886–892 (ESSAISV) are extracellular. A helical transmembrane segment spans residues 893 to 911 (VKILRVLRVLRPLRAINRA). The Cytoplasmic segment spans residues 912–930 (KGLKHVVQCMFVAISTIGN). The chain crosses the membrane as a helical span at residues 931–950 (IVLVTTLLQFMFACIGVQLF). Residues 951–1000 (KGKFFRCTDLSKMTEEECRGYYYVYKDGDPMQIELRHREWVHSDFHFDNV) lie on the Extracellular side of the membrane. Cysteines 957 and 968 form a disulfide. The tract at residues 988–1077 (REWVHSDFHF…FQEQGETEYK (90 aa)) is dihydropyridine binding. The segment at residues 1001–1021 (LSAMMSLFTVSTFEGWPQLLY) is an intramembrane region (pore-forming). A Selectivity filter of repeat III motif is present at residues 1012–1015 (TFEG). Glutamate 1014 is a Ca(2+) binding site. Residues 1022–1038 (KAIDSNAEDVGPIYNNR) lie on the Extracellular side of the membrane. A helical membrane pass occupies residues 1039-1060 (VEMAIFFIIYIILIAFFMMNIF). Residues 1061 to 1118 (VGFVIVTFQEQGETEYKNCELDKNQRQCVQYALKARPLRCYIPKNPYQYQVWYIVTSS) lie on the Cytoplasmic side of the membrane. Residues 1105-1384 (NPYQYQVWYI…LFVAVIMDNF (280 aa)) form an IV repeat. A helical transmembrane segment spans residues 1119-1140 (YFEYLMFALIMLNTICLGMQHY). Residue asparagine 1141 is glycosylated (N-linked (GlcNAc...) asparagine). The Extracellular portion of the chain corresponds to 1141 to 1148 (NQSEQMNH). A helical transmembrane segment spans residues 1149-1170 (ISDILNVAFTIIFTLEMILKLM). Over 1171 to 1180 (AFKARGYFGD) the chain is Cytoplasmic. A helical membrane pass occupies residues 1181-1200 (PWNVFDFLIVIGSIIDVILS). The Extracellular segment spans residues 1201-1231 (EIDTFLASSGGLYCLGGGCGNVDPDESARIS). A helical transmembrane segment spans residues 1232–1250 (SAFFRLFRVMRLIKLLSRA). The Cytoplasmic segment spans residues 1251-1268 (EGVRTLLWTFIKSFQALP). A helical membrane pass occupies residues 1269–1289 (YVALLIVMLFFIYAVIGMQMF). Residues 1290–1311 (GKIALVDGTQINRNNNFQTFPQ) are Extracellular-facing. An intramembrane region (pore-forming) is located at residues 1312–1330 (AVLLLFRCATGEAWQEILL). The short motif at 1321 to 1324 (TGEA) is the Selectivity filter of repeat IV element. At 1331-1356 (ACSYGKLCDPESDYAPGEEYTCGTNF) the chain is on the extracellular side. Residues 1337–1403 (LCDPESDYAP…LGPHHLDEFK (67 aa)) form a dihydropyridine binding region. Cysteine 1338 and cysteine 1352 are disulfide-bonded. Residues 1349–1391 (EYTCGTNFAYYYFISFYMLCAFLVINLFVAVIMDNFDYLTRDW) are phenylalkylamine binding. A helical membrane pass occupies residues 1357–1381 (AYYYFISFYMLCAFLVINLFVAVIM). At 1382-1873 (DNFDYLTRDW…SQETLIPPRL (492 aa)) the chain is on the cytoplasmic side. The segment at 1522 to 1542 (KFYATFLIQEHFRKFMKRQEE) is interaction with calmodulin. A Phosphoserine; by PKA and CAMK2 modification is found at serine 1575. Serine 1617 is modified (phosphoserine; by PKA). The segment at 1731 to 1780 (MPRGQAPPAPCQCPRVESSMPEDRKSSTPGSLHEETPHSRSTRENTSRCS) is disordered. Residues 1751–1776 (PEDRKSSTPGSLHEETPHSRSTRENT) are compositionally biased toward basic and acidic residues.

This sequence belongs to the calcium channel alpha-1 subunit (TC 1.A.1.11) family. CACNA1S subfamily. In terms of assembly, component of a calcium channel complex consisting of a pore-forming alpha subunit (CACNA1S) and the ancillary subunits CACNB1 or CACNB2, CACNG1 and CACNA2D1. The channel complex contains alpha, beta, gamma and delta subunits in a 1:1:1:1 ratio, i.e. it contains either CACNB1 or CACNB2. CACNA1S channel activity is modulated by the auxiliary subunits (CACNB1 or CACNB2, CACNG1 and CACNA2D1). Interacts with DYSF and JSRP1. Interacts with RYR1. Interacts with STAC, STAC2 and STAC3 (via their SH3 domains). Interacts with CALM. In terms of processing, the alpha-1S subunit is found in two isoforms in the skeletal muscle: a minor form of 212 kDa containing the complete amino acid sequence, and a major form of 190 kDa derived from the full-length form by post-translational proteolysis close to Phe-1690. Post-translationally, phosphorylated. Phosphorylation by PKA activates the calcium channel. Both the minor and major forms are phosphorylated in vitro by PKA. Phosphorylation at Ser-1575 is involved in beta-adrenergic-mediated regulation of the channel. Skeletal muscle specific.

It localises to the cell membrane. It is found in the sarcolemma. The protein localises to the T-tubule. The enzyme catalyses Ca(2+)(in) = Ca(2+)(out). Its activity is regulated as follows. Channel activity is blocked by dihydropyridines (DHP), phenylalkylamines, and by benzothiazepines. In terms of biological role, pore-forming, alpha-1S subunit of the voltage-gated calcium channel that gives rise to L-type calcium currents in skeletal muscle. Calcium channels containing the alpha-1S subunit play an important role in excitation-contraction coupling in skeletal muscle via their interaction with RYR1, which triggers Ca(2+) release from the sarcoplasmic reticulum and ultimately results in muscle contraction. Long-lasting (L-type) calcium channels belong to the 'high-voltage activated' (HVA) group. This Homo sapiens (Human) protein is Voltage-dependent L-type calcium channel subunit alpha-1S (CACNA1S).